A 143-amino-acid chain; its full sequence is NADH-quinone oxidoreductase subunit A (143 aa).

3 consecutive transmembrane segments (helical) span residues 7-27 (GFGNVFVFLALGIVFVAGGYL), 63-83 (FYVVALIFIIFDVEVVFLYPW), and 93-113 (FALFEALVFAGILILGLAYAW).

This sequence belongs to the complex I subunit 3 family. In terms of assembly, NDH-1 is composed of 14 different subunits. Subunits NuoA, H, J, K, L, M, N constitute the membrane sector of the complex.

It localises to the cell inner membrane. The catalysed reaction is a quinone + NADH + 5 H(+)(in) = a quinol + NAD(+) + 4 H(+)(out). Its function is as follows. NDH-1 shuttles electrons from NADH, via FMN and iron-sulfur (Fe-S) centers, to quinones in the respiratory chain. The immediate electron acceptor for the enzyme in this species is believed to be a menaquinone. Couples the redox reaction to proton translocation (for every two electrons transferred, four hydrogen ions are translocated across the cytoplasmic membrane), and thus conserves the redox energy in a proton gradient. The sequence is that of NADH-quinone oxidoreductase subunit A from Chlorobium limicola (strain DSM 245 / NBRC 103803 / 6330).